Reading from the N-terminus, the 97-residue chain is Citrate lyase acyl carrier protein (97 aa).

Ser14 carries the post-translational modification O-(phosphoribosyl dephospho-coenzyme A)serine.

The protein belongs to the CitD family. Oligomer with a subunit composition of (alpha,beta,gamma)6.

It localises to the cytoplasm. Its function is as follows. Covalent carrier of the coenzyme of citrate lyase. The sequence is that of Citrate lyase acyl carrier protein from Lactobacillus acidophilus (strain ATCC 700396 / NCK56 / N2 / NCFM).